The sequence spans 202 residues: Small ribosomal subunit protein uS4c (202 aa).

The disordered stretch occupies residues 13–37; that stretch reads RRPGVSPGLTSKTLKSKSNYIDRST. The segment covering 20 to 37 has biased composition (polar residues); it reads GLTSKTLKSKSNYIDRST. The region spanning 90–153 is the S4 RNA-binding domain; it reads MRLDNTIFRL…ESRSMISKNI (64 aa).

It belongs to the universal ribosomal protein uS4 family. As to quaternary structure, part of the 30S ribosomal subunit. Contacts protein S5. The interaction surface between S4 and S5 is involved in control of translational fidelity.

The protein localises to the plastid. The protein resides in the chloroplast. Its function is as follows. One of the primary rRNA binding proteins, it binds directly to 16S rRNA where it nucleates assembly of the body of the 30S subunit. With S5 and S12 plays an important role in translational accuracy. The protein is Small ribosomal subunit protein uS4c (rps4) of Takakia lepidozioides (Moss).